The primary structure comprises 333 residues: Ketol-acid reductoisomerase (NADP(+)) (333 aa).

One can recognise a KARI N-terminal Rossmann domain in the interval 2–182 (AKLYYEKDCN…GGARAGVLKT (181 aa)). Residues 25–28 (YGSQ), Ser-51, Ser-53, and 83–86 (DEKQ) contribute to the NADP(+) site. The active site involves His-108. Residue Gly-134 coordinates NADP(+). In terms of domain architecture, KARI C-terminal knotted spans 183-328 (TFKEETETDL…KELRDMMSWS (146 aa)). Mg(2+)-binding residues include Asp-191, Glu-195, Glu-227, and Glu-231. Substrate is bound at residue Ser-252.

The protein belongs to the ketol-acid reductoisomerase family. It depends on Mg(2+) as a cofactor.

The enzyme catalyses (2R)-2,3-dihydroxy-3-methylbutanoate + NADP(+) = (2S)-2-acetolactate + NADPH + H(+). It catalyses the reaction (2R,3R)-2,3-dihydroxy-3-methylpentanoate + NADP(+) = (S)-2-ethyl-2-hydroxy-3-oxobutanoate + NADPH + H(+). It functions in the pathway amino-acid biosynthesis; L-isoleucine biosynthesis; L-isoleucine from 2-oxobutanoate: step 2/4. The protein operates within amino-acid biosynthesis; L-valine biosynthesis; L-valine from pyruvate: step 2/4. In terms of biological role, involved in the biosynthesis of branched-chain amino acids (BCAA). Catalyzes an alkyl-migration followed by a ketol-acid reduction of (S)-2-acetolactate (S2AL) to yield (R)-2,3-dihydroxy-isovalerate. In the isomerase reaction, S2AL is rearranged via a Mg-dependent methyl migration to produce 3-hydroxy-3-methyl-2-ketobutyrate (HMKB). In the reductase reaction, this 2-ketoacid undergoes a metal-dependent reduction by NADPH to yield (R)-2,3-dihydroxy-isovalerate. The polypeptide is Ketol-acid reductoisomerase (NADP(+)) (Alkaliphilus metalliredigens (strain QYMF)).